Here is a 395-residue protein sequence, read N- to C-terminus: MAKEKFDRSKTHANIGTIGHVDHGKTTLTAAIATVLSKKMGGTAKSYADIDNAPEEKERGITINTSHVEYETETRHYAHVDCPGHADYVKNMITGAAQMDGGILVVSAADGPMPQTREHILLSRQVGVPYLVVFMNKCDMVDDEELLELVEMEIRDLLSEYDFPGDDIPVIKGSALKALEGEPEWEEKIVELMDAVDSYIPTPERQTDKPFMMPVEDVFSITGRGTVATGRVERGQVKVGDVVEIIGIAEEAKSTTVTGVEMFRKLLDYAEAGDNIGALLRGVAREEIQRGQVLAKPGSITPHTNFKAEVYVLSKEEGGRHTPFFSNYRPQFYFRTTDVTGICNLPEGVEMVMPGDNIEMTVELIAPIALEEGTKFSIREGGRTVGAGVVASIQK.

The tr-type G domain occupies 10–204 (KTHANIGTIG…AVDSYIPTPE (195 aa)). The G1 stretch occupies residues 19 to 26 (GHVDHGKT). Position 19–26 (19–26 (GHVDHGKT)) interacts with GTP. Residue threonine 26 participates in Mg(2+) binding. A G2 region spans residues 60 to 64 (GITIN). Residues 81 to 84 (DCPG) are G3. GTP-binding positions include 81-85 (DCPGH) and 136-139 (NKCD). Residues 136 to 139 (NKCD) are G4. The interval 174 to 176 (SAL) is G5.

This sequence belongs to the TRAFAC class translation factor GTPase superfamily. Classic translation factor GTPase family. EF-Tu/EF-1A subfamily. In terms of assembly, monomer.

Its subcellular location is the cytoplasm. It carries out the reaction GTP + H2O = GDP + phosphate + H(+). GTP hydrolase that promotes the GTP-dependent binding of aminoacyl-tRNA to the A-site of ribosomes during protein biosynthesis. This Lysinibacillus sphaericus (strain C3-41) protein is Elongation factor Tu.